A 206-amino-acid polypeptide reads, in one-letter code: Cytochrome c oxidase assembly protein CtaG (206 aa).

Residues 1 to 12 (MSKKPAGKNSNR) lie on the Cytoplasmic side of the membrane. The chain crosses the membrane as a helical; Signal-anchor for type II membrane protein span at residues 13 to 35 (IVAAVCLAFFTGMIGMAYAAVPL). Topologically, residues 36-206 (YKMFCQATGY…ISDTEANLGG (171 aa)) are periplasmic. The segment at 184 to 206 (VASSEPVQGTSKIISDTEANLGG) is disordered. A compositionally biased stretch (polar residues) spans 188–206 (EPVQGTSKIISDTEANLGG).

This sequence belongs to the COX11/CtaG family.

The protein localises to the cell inner membrane. In terms of biological role, exerts its effect at some terminal stage of cytochrome c oxidase synthesis, probably by being involved in the insertion of the copper B into subunit I. The polypeptide is Cytochrome c oxidase assembly protein CtaG (Mesorhizobium japonicum (strain LMG 29417 / CECT 9101 / MAFF 303099) (Mesorhizobium loti (strain MAFF 303099))).